The sequence spans 63 residues: 2-hydroxymuconate tautomerase (63 aa).

The active-site Proton acceptor; via imino nitrogen is the proline 2.

The protein belongs to the 4-oxalocrotonate tautomerase family. As to quaternary structure, homohexamer.

It carries out the reaction (2Z,4E)-2-hydroxyhexa-2,4-dienedioate = (3E)-2-oxohex-3-enedioate. It functions in the pathway aromatic compound metabolism; salicylate degradation. Catalyzes the ketonization of 2-hydroxymuconate stereoselectively to yield 2-oxo-3-hexenedioate. The polypeptide is 2-hydroxymuconate tautomerase (aphI) (Comamonas testosteroni (Pseudomonas testosteroni)).